A 385-amino-acid polypeptide reads, in one-letter code: Transcription termination factor 2, mitochondrial (385 aa).

The transit peptide at 1–35 (MPWRLPTGHQLCRLCLLRKPRPALKIKPSSACVTY) directs the protein to the mitochondrion.

This sequence belongs to the mTERF family. Monomer.

Its subcellular location is the mitochondrion matrix. It localises to the mitochondrion nucleoid. Binds mitochondrial DNA and plays a role in the regulation of transcription of mitochondrial mRNA and rRNA species. The polypeptide is Transcription termination factor 2, mitochondrial (Mterf2) (Mus musculus (Mouse)).